Reading from the N-terminus, the 334-residue chain is tRNA N6-adenosine threonylcarbamoyltransferase (334 aa).

Fe cation is bound by residues H112 and H116. Substrate-binding positions include 135–139, D168, G181, D185, and N274; that span reads VVSGG. D303 lines the Fe cation pocket.

It belongs to the KAE1 / TsaD family. Requires Fe(2+) as cofactor.

It localises to the cytoplasm. It catalyses the reaction L-threonylcarbamoyladenylate + adenosine(37) in tRNA = N(6)-L-threonylcarbamoyladenosine(37) in tRNA + AMP + H(+). Functionally, required for the formation of a threonylcarbamoyl group on adenosine at position 37 (t(6)A37) in tRNAs that read codons beginning with adenine. Is involved in the transfer of the threonylcarbamoyl moiety of threonylcarbamoyl-AMP (TC-AMP) to the N6 group of A37, together with TsaE and TsaB. TsaD likely plays a direct catalytic role in this reaction. The polypeptide is tRNA N6-adenosine threonylcarbamoyltransferase (Anaeromyxobacter dehalogenans (strain 2CP-1 / ATCC BAA-258)).